The following is a 148-amino-acid chain: Pivalyl-CoA mutase small subunit (148 aa).

One can recognise a B12-binding domain in the interval 8–138 (PLRVLVTKIG…TALGQKSRAE (131 aa)). Histidine 21 provides a ligand contact to adenosylcob(III)alamin.

It belongs to the acyl-CoA mutase small subunit family. As to quaternary structure, monomer in the absence of the PCM large subunit. Weakly interacts with the PCM large subunit; an alpha(2)beta(2) stoichiometry seems to represent the active state of the enzyme. Requires adenosylcob(III)alamin as cofactor.

The enzyme catalyses 3-methylbutanoyl-CoA = 2,2-dimethylpropanoyl-CoA. Its function is as follows. Together with Xaut_5043, catalyzes the reversible isomerization between pivalyl-CoA and isovaleryl-CoA, using radical chemistry. Does not exhibit isobutyryl-CoA mutase (ICM) activity. This is Pivalyl-CoA mutase small subunit from Xanthobacter autotrophicus (strain ATCC BAA-1158 / Py2).